The following is an 805-amino-acid chain: Transitional endoplasmic reticulum ATPase (805 aa).

At S3 the chain carries Phosphoserine. ATP is bound by residues 247 to 253, N348, H384, and 521 to 526; these read PGTGKTL and GCGKTL. The disordered stretch occupies residues 768–805; sequence FGSFRFPAGGQGGAGPSQGAGGGSGGSHFNEEEDDLYG. The segment covering 776–793 has biased composition (gly residues); it reads GGQGGAGPSQGAGGGSGG.

The protein belongs to the AAA ATPase family. As to quaternary structure, homohexamer. Forms a ring-shaped particle of 12.5 nm diameter, that displays 6-fold radial symmetry. Interacts with the FACT/DUF complex, which includes subunits ssrp1/duf87 and supt16h/duf140. In terms of processing, phosphorylated.

Its subcellular location is the cytoplasm. It is found in the cytosol. It localises to the endoplasmic reticulum. The protein localises to the nucleus. The protein resides in the stress granule. The enzyme catalyses ATP + H2O = ADP + phosphate + H(+). With respect to regulation, ATPase activity is inhibited or reduced by lowering pH from 9.0 to 7.0, and by addition of Ca(2+), EDTA, KNO(3) or by treatment with N-ethylmaleimide (NEM). Necessary for the fragmentation of Golgi stacks during mitosis and for their reassembly after mitosis. Involved in the formation of the nuclear envelope, and of the transitional endoplasmic reticulum (tER). The transfer of membranes from the endoplasmic reticulum to the Golgi apparatus occurs via 50-70 nm transition vesicles which derive from part-rough, part-smooth transitional elements of the endoplasmic reticulum (tER). Vesicle budding from the tER is an ATP-dependent process. Involved in endoplasmic reticulum stress-induced pre-emptive quality control, a mechanism that selectively attenuates the translocation of newly synthesized proteins into the endoplasmic reticulum and reroutes them to the cytosol for proteasomal degradation. Involved in clearance process by mediating G3BP1 extraction from stress granules. Also involved in DNA damage response: recruited to double-strand breaks (DSBs) sites and promotes the recruitment of tp53bp1 at DNA damage sites. Together with sprtn metalloprotease, involved in the repair of covalent DNA-protein cross-links (DPCs) during DNA synthesis. Involved in interstrand cross-link repair in response to replication stress by mediating unloading of the ubiquitinated CMG helicase complex. Enhances cell cycle progression and inhibits apoptosis at low temperatures. Essential for the maturation of ubiquitin-containing autophagosomes and the clearance of ubiquitinated protein by autophagy. Acts as a negative regulator of type I interferon production by promoting ubiquitination of rigi. May play a role in the ubiquitin-dependent sorting of membrane proteins to lysosomes where they undergo degradation. May more particularly play a role in caveolins sorting in cells. By controlling the steady-state expression of the IGF1R receptor, indirectly regulates the insulin-like growth factor receptor signaling pathway. The polypeptide is Transitional endoplasmic reticulum ATPase (Xenopus tropicalis (Western clawed frog)).